Consider the following 43-residue polypeptide: Gene 75 protein (43 aa).

This Mycobacterium (Mycobacteriophage L5) protein is Gene 75 protein (75).